We begin with the raw amino-acid sequence, 609 residues long: Phosphatidylinositol N-acetylglucosaminyltransferase subunit GPI1 (609 aa).

Topologically, residues 1 to 186 are extracellular; it reads MPNYIFWPYE…STCIYKMVAK (186 aa). A helical membrane pass occupies residues 187–207; that stretch reads IGFYLTFVICSIASLVSSLLN. Residues 208–280 lie on the Cytoplasmic side of the membrane; it reads YSHFQLVNYS…FYPDYILLYN (73 aa). A helical membrane pass occupies residues 281–301; the sequence is TIWLIINDISFGLILGAILIE. Over 302 to 380 the chain is Extracellular; sequence NRDFLVSASH…LSSLLTLTIY (79 aa). A helical transmembrane segment spans residues 381-401; it reads MMFLVGFSFAVSLAIDFFAIL. Residues 402–451 lie on the Cytoplasmic side of the membrane; sequence SFPIYVFYRISSKLYHCQLNIMASLFNLFCGKKRNVLRNRIDHNYFQLDQ. The helical transmembrane segment at 452-472 threads the bilayer; it reads LLLGTLLFIILVFLTPTVMAF. Over 473–485 the chain is Extracellular; it reads YMSYTVLRMLTIT. Residues 486-506 traverse the membrane as a helical segment; that stretch reads IEIFSEAVIALINHFPLFALL. The Cytoplasmic portion of the chain corresponds to 507–609; sequence LRLKDPKRLP…DLYKRLTIQA (103 aa).

It belongs to the PIGQ family. As to quaternary structure, component of the phosphatidylinositol N-acetylglucosaminyltransferase (GPI-GlcNAc transferase) complex composed of at least GPI1, GPI2, GPI3, GPI15, GPI19 and ERI1.

It is found in the membrane. It carries out the reaction a 1,2-diacyl-sn-glycero-3-phospho-(1D-myo-inositol) + UDP-N-acetyl-alpha-D-glucosamine = a 6-(N-acetyl-alpha-D-glucosaminyl)-1-(1,2-diacyl-sn-glycero-3-phospho)-1D-myo-inositol + UDP + H(+). The protein operates within glycolipid biosynthesis; glycosylphosphatidylinositol-anchor biosynthesis. Functionally, part of the complex catalyzing the transfer of N-acetylglucosamine from UDP-N-acetylglucosamine to phosphatidylinositol, the first step of GPI biosynthesis. The sequence is that of Phosphatidylinositol N-acetylglucosaminyltransferase subunit GPI1 (GPI1) from Saccharomyces cerevisiae (strain ATCC 204508 / S288c) (Baker's yeast).